A 186-amino-acid polypeptide reads, in one-letter code: Ribosome-recycling factor (186 aa).

It belongs to the RRF family.

It localises to the cytoplasm. Its function is as follows. Responsible for the release of ribosomes from messenger RNA at the termination of protein biosynthesis. May increase the efficiency of translation by recycling ribosomes from one round of translation to another. The sequence is that of Ribosome-recycling factor from Azorhizobium caulinodans (strain ATCC 43989 / DSM 5975 / JCM 20966 / LMG 6465 / NBRC 14845 / NCIMB 13405 / ORS 571).